Here is a 356-residue protein sequence, read N- to C-terminus: Histidinol-phosphate aminotransferase (356 aa).

An N6-(pyridoxal phosphate)lysine modification is found at Lys-208.

Belongs to the class-II pyridoxal-phosphate-dependent aminotransferase family. Histidinol-phosphate aminotransferase subfamily. Homodimer. Pyridoxal 5'-phosphate serves as cofactor.

It carries out the reaction L-histidinol phosphate + 2-oxoglutarate = 3-(imidazol-4-yl)-2-oxopropyl phosphate + L-glutamate. Its pathway is amino-acid biosynthesis; L-histidine biosynthesis; L-histidine from 5-phospho-alpha-D-ribose 1-diphosphate: step 7/9. The polypeptide is Histidinol-phosphate aminotransferase (Lactococcus lactis subsp. cremoris (strain MG1363)).